Consider the following 221-residue polypeptide: MAEFDARDLLDCYARGVFPMADAREDARVFLIDPERRGVIPLEAFHVPRRLARTVRGDPFEIRIDAAFHDVVLACAASGPGRTETWINRPIEQLYLELHELGFAHSVECWQGERLVGGLYGVSLQGAFFGESMFSRVRDASKVALVHLVARLIAGGFTLLDAQFMTEHLAQFGAREIPRREYHRRLDRALAAPADFYALGAAAPSADGAGRLALQLITQAS.

It belongs to the L/F-transferase family.

Its subcellular location is the cytoplasm. The catalysed reaction is N-terminal L-lysyl-[protein] + L-leucyl-tRNA(Leu) = N-terminal L-leucyl-L-lysyl-[protein] + tRNA(Leu) + H(+). It carries out the reaction N-terminal L-arginyl-[protein] + L-leucyl-tRNA(Leu) = N-terminal L-leucyl-L-arginyl-[protein] + tRNA(Leu) + H(+). It catalyses the reaction L-phenylalanyl-tRNA(Phe) + an N-terminal L-alpha-aminoacyl-[protein] = an N-terminal L-phenylalanyl-L-alpha-aminoacyl-[protein] + tRNA(Phe). Functionally, functions in the N-end rule pathway of protein degradation where it conjugates Leu, Phe and, less efficiently, Met from aminoacyl-tRNAs to the N-termini of proteins containing an N-terminal arginine or lysine. In Phenylobacterium zucineum (strain HLK1), this protein is Leucyl/phenylalanyl-tRNA--protein transferase.